The sequence spans 276 residues: Outer plastidial membrane protein porin (276 aa).

It belongs to the eukaryotic mitochondrial porin (TC 1.B.8.1) family.

The protein resides in the plastid outer membrane. Functionally, forms a channel through the cell membrane that allows diffusion of small hydrophilic molecules. The channel adopts an open conformation at low or zero membrane potential and a closed conformation at potentials above 30-40 mV. The open state has a weak anion selectivity whereas the closed state is cation-selective. The sequence is that of Outer plastidial membrane protein porin (POR1) from Pisum sativum (Garden pea).